The following is a 171-amino-acid chain: MIGWLEALLRVGRKLAAKTVTVQYPEVKPQLPPRSRGRIVLTRDPDGQERCVACNLCAVACPVGCIDLSKAVAEDGRWYPEHFRINFARCIFCGYCEEACPTAAIQLTPDFELSEWRRDALVYDKKDLLIAGEGKVRGYRYWSVAGKAITGKDKGDAEHEAPPVDLKGLRP.

4Fe-4S ferredoxin-type domains are found at residues 39 to 71 (IVLTRDPDGQERCVACNLCAVACPVGCIDLSKA) and 81 to 110 (EHFRINFARCIFCGYCEEACPTAAIQLTPD). [4Fe-4S] cluster is bound by residues Cys-51, Cys-54, Cys-57, Cys-61, Cys-90, Cys-93, Cys-96, and Cys-100.

It belongs to the complex I 23 kDa subunit family. In terms of assembly, NDH-1 is composed of 14 different subunits. Subunits NuoA, H, J, K, L, M, N constitute the membrane sector of the complex. Requires [4Fe-4S] cluster as cofactor.

It is found in the cell inner membrane. The catalysed reaction is a quinone + NADH + 5 H(+)(in) = a quinol + NAD(+) + 4 H(+)(out). NDH-1 shuttles electrons from NADH, via FMN and iron-sulfur (Fe-S) centers, to quinones in the respiratory chain. The immediate electron acceptor for the enzyme in this species is believed to be ubiquinone. Couples the redox reaction to proton translocation (for every two electrons transferred, four hydrogen ions are translocated across the cytoplasmic membrane), and thus conserves the redox energy in a proton gradient. This Rhodopseudomonas palustris (strain BisB18) protein is NADH-quinone oxidoreductase subunit I 2.